A 210-amino-acid polypeptide reads, in one-letter code: Potassium-transporting ATPase KdpC subunit (210 aa).

A helical transmembrane segment spans residues 13 to 33; the sequence is LVTLVLLLVCGLAYPLILTGI.

The protein belongs to the KdpC family. In terms of assembly, the system is composed of three essential subunits: KdpA, KdpB and KdpC.

The protein resides in the cell membrane. Part of the high-affinity ATP-driven potassium transport (or Kdp) system, which catalyzes the hydrolysis of ATP coupled with the electrogenic transport of potassium into the cytoplasm. This subunit acts as a catalytic chaperone that increases the ATP-binding affinity of the ATP-hydrolyzing subunit KdpB by the formation of a transient KdpB/KdpC/ATP ternary complex. The protein is Potassium-transporting ATPase KdpC subunit of Clostridium kluyveri (strain ATCC 8527 / DSM 555 / NBRC 12016 / NCIMB 10680 / K1).